The chain runs to 635 residues: Biosynthetic arginine decarboxylase (635 aa).

The residue at position 100 (lysine 100) is an N6-(pyridoxal phosphate)lysine. 282 to 292 (LDIGGGLGVDY) is a binding site for substrate.

This sequence belongs to the Orn/Lys/Arg decarboxylase class-II family. SpeA subfamily. The cofactor is Mg(2+). Requires pyridoxal 5'-phosphate as cofactor.

The catalysed reaction is L-arginine + H(+) = agmatine + CO2. It functions in the pathway amine and polyamine biosynthesis; agmatine biosynthesis; agmatine from L-arginine: step 1/1. In terms of biological role, catalyzes the biosynthesis of agmatine from arginine. This is Biosynthetic arginine decarboxylase from Geobacter sp. (strain M21).